We begin with the raw amino-acid sequence, 274 residues long: Protein FRG1 homolog (274 aa).

The Nuclear localization signal motif lies at 20-36 (KKNLFKVGKEKKKKNKD). A disordered region spans residues 27–46 (GKEKKKKNKDDKEKIDPDTV). A compositionally biased stretch (basic and acidic residues) spans 34–43 (NKDDKEKIDP). Positions 252 to 268 (QADGSAHELLLDRRMKM) match the Bipartite nuclear localization signal motif.

It belongs to the FRG1 family.

It is found in the nucleus. The protein localises to the cajal body. It localises to the nucleolus. Its subcellular location is the cytoplasm. Binds to mRNA in a sequence-independent manner. May play a role in regulation of pre-mRNA splicing or in the assembly of rRNA into ribosomal subunits. May be involved in mRNA transport. May be involved in epigenetic regulation of muscle differentiation through regulation of activity of the histone-lysine N-methyltransferase KMT5B. In Caenorhabditis elegans, this protein is Protein FRG1 homolog (frg-1).